A 2007-amino-acid chain; its full sequence is Structural maintenance of chromosomes flexible hinge domain-containing protein 1 (2007 aa).

Ala2 carries the post-translational modification N-acetylalanine. Residues 111–702 (TKERIDFLPH…LSVTWPEGDE (592 aa)) are ATPase activity domain. The residue at position 833 (Ser833) is a Phosphoserine. Residue Lys1350 is modified to N6-acetyllysine. Residue Lys1375 forms a Glycyl lysine isopeptide (Lys-Gly) (interchain with G-Cter in SUMO2) linkage. A Phosphothreonine modification is found at Thr1500. Positions 1721 to 1848 (GDILGKIAHL…DNLDAANHYR (128 aa)) constitute an SMC hinge domain. Residue Lys1803 is modified to N6-succinyllysine. The residue at position 1975 (Ser1975) is a Phosphoserine. Positions 1984–2007 (PIPTKRMRRESTRQNRRPKGDVPN) are disordered.

The protein belongs to the SMC family. Highly divergent. Homodimer; homodimerizes via its SMC hinge domain. Interacts with LRIF1. Post-translationally, sumoylated with SUMO1. In terms of tissue distribution, during embryogenesis, specifically expressed in immature olfactory sensory neurons.

The protein localises to the chromosome. It carries out the reaction ATP + H2O = ADP + phosphate + H(+). Its function is as follows. Non-canonical member of the structural maintenance of chromosomes (SMC) protein family that plays a key role in epigenetic silencing by regulating chromatin architecture. Promotes heterochromatin formation in both autosomes and chromosome X, probably by mediating the merge of chromatin compartments. Plays a key role in chromosome X inactivation in females by promoting the spreading of heterochromatin. Recruited to inactivated chromosome X by Xist RNA and acts by mediating the merge of chromatin compartments: promotes random chromatin interactions that span the boundaries of existing structures, leading to create a compartment-less architecture typical of inactivated chromosome X. Required to facilitate Xist RNA spreading. Also required for silencing of a subset of clustered autosomal loci in somatic cells, such as the DUX4 locus. Has ATPase activity; may participate in structural manipulation of chromatin in an ATP-dependent manner as part of its role in gene expression regulation. Also plays a role in DNA repair: localizes to sites of DNA double-strand breaks in response to DNA damage to promote the repair of DNA double-strand breaks. Acts by promoting non-homologous end joining (NHEJ) and inhibiting homologous recombination (HR) repair. Required during preimplantation development, probably acts by regulating chromatin architecture. The chain is Structural maintenance of chromosomes flexible hinge domain-containing protein 1 from Mus musculus (Mouse).